The following is a 199-amino-acid chain: Outer-membrane lipoprotein LolB (199 aa).

A signal peptide spans 1–28 (MAAAGSLCQTAWRVRGWLAAGLCALLAG). A lipid anchor (N-palmitoyl cysteine) is attached at cysteine 29. The S-diacylglycerol cysteine moiety is linked to residue cysteine 29.

It belongs to the LolB family. As to quaternary structure, monomer.

It is found in the cell outer membrane. Functionally, plays a critical role in the incorporation of lipoproteins in the outer membrane after they are released by the LolA protein. The polypeptide is Outer-membrane lipoprotein LolB (Bordetella petrii (strain ATCC BAA-461 / DSM 12804 / CCUG 43448)).